The primary structure comprises 99 residues: Osteocalcin (99 aa).

The N-terminal stretch at 1 to 23 (MRTLSLLTLLALTAFCLSDLAGA) is a signal peptide. A propeptide spanning residues 24 to 49 (KPSDSESDKAFMSKQEGSKVVNRLRR) is cleaved from the precursor. The 47-residue stretch at 50-96 (YLNNGLGAPAPYPDPLEPHREVCELNPNCDELADHIGFQDAYKRIYG) folds into the Gla domain. Pro-58 is subject to Hydroxyproline. The Ca(2+) site is built by Glu-66, Glu-70, Glu-73, and Asp-79. Glu-66, Glu-70, and Glu-73 each carry 4-carboxyglutamate. A disulfide bond links Cys-72 and Cys-78.

The protein belongs to the osteocalcin/matrix Gla protein family. Gamma-carboxyglutamate residues are formed by vitamin K dependent carboxylation by GGCX. These residues are essential for the binding of calcium. Decarboxylation promotes the hormone activity.

It localises to the secreted. Its function is as follows. The carboxylated form is one of the main organic components of the bone matrix, which constitutes 1-2% of the total bone protein: it acts as a negative regulator of bone formation and is required to limit bone formation without impairing bone resorption or mineralization. The carboxylated form binds strongly to apatite and calcium. In terms of biological role, the uncarboxylated form acts as a hormone secreted by osteoblasts, which regulates different cellular processes, such as energy metabolism, male fertility and brain development. Regulates of energy metabolism by acting as a hormone favoring pancreatic beta-cell proliferation, insulin secretion and sensitivity and energy expenditure. Uncarboxylated osteocalcin hormone also promotes testosterone production in the testes: acts as a ligand for G protein-coupled receptor GPRC6A at the surface of Leydig cells, initiating a signaling response that promotes the expression of enzymes required for testosterone synthesis in a CREB-dependent manner. Also acts as a regulator of brain development: osteocalcin hormone crosses the blood-brain barrier and acts as a ligand for GPR158 on neurons, initiating a signaling response that prevents neuronal apoptosis in the hippocampus, favors the synthesis of all monoamine neurotransmitters and inhibits that of gamma-aminobutyric acid (GABA). Osteocalcin also crosses the placenta during pregnancy and maternal osteocalcin is required for fetal brain development. In Rattus norvegicus (Rat), this protein is Osteocalcin (Bglap).